A 365-amino-acid chain; its full sequence is Histidinol-phosphate aminotransferase (365 aa).

A disordered region spans residues Met1 to Pro22. Lys221 carries the N6-(pyridoxal phosphate)lysine modification.

This sequence belongs to the class-II pyridoxal-phosphate-dependent aminotransferase family. Histidinol-phosphate aminotransferase subfamily. As to quaternary structure, homodimer. Pyridoxal 5'-phosphate is required as a cofactor.

It catalyses the reaction L-histidinol phosphate + 2-oxoglutarate = 3-(imidazol-4-yl)-2-oxopropyl phosphate + L-glutamate. The protein operates within amino-acid biosynthesis; L-histidine biosynthesis; L-histidine from 5-phospho-alpha-D-ribose 1-diphosphate: step 7/9. The protein is Histidinol-phosphate aminotransferase of Rhodopseudomonas palustris (strain BisB5).